Consider the following 684-residue polypeptide: Soluble guanylate cyclase gcy-32 (684 aa).

Heme is bound at residue His105. Residues 396 to 432 (DVEVNLQLEANNEQLETMTRELELERQKTDSILKDML) are a coiled coil. The 129-residue stretch at 454 to 582 (TVMFCDLPAF…ETVTLASQME (129 aa)) folds into the Guanylate cyclase domain. Positions 459 and 503 each coordinate Mg(2+).

It belongs to the adenylyl cyclase class-4/guanylyl cyclase family. Heterodimer; with other soluble guanylate cyclases. Requires heme as cofactor. Expressed in a small number of neurons, corresponding to URX, AQR and PQR neurons.

It localises to the cytoplasm. It catalyses the reaction GTP = 3',5'-cyclic GMP + diphosphate. Its activity is regulated as follows. May be regulated by molecular oxygen. Probably not activated by nitric oxide (NO). In terms of biological role, synthesizes cyclic GMP (cGMP) from GTP. Influences aerotaxis responses, aggregation and bordering behaviors (gathering around the edge of a bacterial lawn) in combination with other soluble guanylate cyclases. This Caenorhabditis elegans protein is Soluble guanylate cyclase gcy-32 (gcy-32).